The chain runs to 443 residues: Proline--tRNA ligase (443 aa).

This sequence belongs to the class-II aminoacyl-tRNA synthetase family. ProS type 2 subfamily. Homodimer.

The protein localises to the cytoplasm. It carries out the reaction tRNA(Pro) + L-proline + ATP = L-prolyl-tRNA(Pro) + AMP + diphosphate. Functionally, catalyzes the attachment of proline to tRNA(Pro) in a two-step reaction: proline is first activated by ATP to form Pro-AMP and then transferred to the acceptor end of tRNA(Pro). The chain is Proline--tRNA ligase from Methylobacterium nodulans (strain LMG 21967 / CNCM I-2342 / ORS 2060).